Reading from the N-terminus, the 621-residue chain is DNA mismatch repair protein MutL (621 aa).

This sequence belongs to the DNA mismatch repair MutL/HexB family.

Its function is as follows. This protein is involved in the repair of mismatches in DNA. It is required for dam-dependent methyl-directed DNA mismatch repair. May act as a 'molecular matchmaker', a protein that promotes the formation of a stable complex between two or more DNA-binding proteins in an ATP-dependent manner without itself being part of a final effector complex. The sequence is that of DNA mismatch repair protein MutL from Petrotoga mobilis (strain DSM 10674 / SJ95).